The sequence spans 267 residues: Indole-3-glycerol phosphate synthase (267 aa).

This sequence belongs to the TrpC family.

The catalysed reaction is 1-(2-carboxyphenylamino)-1-deoxy-D-ribulose 5-phosphate + H(+) = (1S,2R)-1-C-(indol-3-yl)glycerol 3-phosphate + CO2 + H2O. The protein operates within amino-acid biosynthesis; L-tryptophan biosynthesis; L-tryptophan from chorismate: step 4/5. The chain is Indole-3-glycerol phosphate synthase from Dichelobacter nodosus (strain VCS1703A).